Here is a 153-residue protein sequence, read N- to C-terminus: 6,7-dimethyl-8-ribityllumazine synthase (153 aa).

5-amino-6-(D-ribitylamino)uracil contacts are provided by residues F22, 56–58 (AFE), and 80–82 (AVI). 85–86 (ST) provides a ligand contact to (2S)-2-hydroxy-3-oxobutyl phosphate. The active-site Proton donor is the H88. F113 contacts 5-amino-6-(D-ribitylamino)uracil. R127 lines the (2S)-2-hydroxy-3-oxobutyl phosphate pocket.

It belongs to the DMRL synthase family.

It catalyses the reaction (2S)-2-hydroxy-3-oxobutyl phosphate + 5-amino-6-(D-ribitylamino)uracil = 6,7-dimethyl-8-(1-D-ribityl)lumazine + phosphate + 2 H2O + H(+). It participates in cofactor biosynthesis; riboflavin biosynthesis; riboflavin from 2-hydroxy-3-oxobutyl phosphate and 5-amino-6-(D-ribitylamino)uracil: step 1/2. Catalyzes the formation of 6,7-dimethyl-8-ribityllumazine by condensation of 5-amino-6-(D-ribitylamino)uracil with 3,4-dihydroxy-2-butanone 4-phosphate. This is the penultimate step in the biosynthesis of riboflavin. The protein is 6,7-dimethyl-8-ribityllumazine synthase of Clostridium novyi (strain NT).